We begin with the raw amino-acid sequence, 178 residues long: Large ribosomal subunit protein uL6 (178 aa).

The protein belongs to the universal ribosomal protein uL6 family. As to quaternary structure, part of the 50S ribosomal subunit.

In terms of biological role, this protein binds to the 23S rRNA, and is important in its secondary structure. It is located near the subunit interface in the base of the L7/L12 stalk, and near the tRNA binding site of the peptidyltransferase center. This is Large ribosomal subunit protein uL6 from Sulfurovum sp. (strain NBC37-1).